A 404-amino-acid chain; its full sequence is Probable tRNA sulfurtransferase (404 aa).

Residues 60-165 form the THUMP domain; that stretch reads QPVAESLKQI…EEAAYISYET (106 aa). Residues 183–184, 208–209, arginine 265, glycine 287, and glutamine 296 each bind ATP; these read ML and HF.

It belongs to the ThiI family.

It localises to the cytoplasm. The catalysed reaction is [ThiI sulfur-carrier protein]-S-sulfanyl-L-cysteine + a uridine in tRNA + 2 reduced [2Fe-2S]-[ferredoxin] + ATP + H(+) = [ThiI sulfur-carrier protein]-L-cysteine + a 4-thiouridine in tRNA + 2 oxidized [2Fe-2S]-[ferredoxin] + AMP + diphosphate. The enzyme catalyses [ThiS sulfur-carrier protein]-C-terminal Gly-Gly-AMP + S-sulfanyl-L-cysteinyl-[cysteine desulfurase] + AH2 = [ThiS sulfur-carrier protein]-C-terminal-Gly-aminoethanethioate + L-cysteinyl-[cysteine desulfurase] + A + AMP + 2 H(+). The protein operates within cofactor biosynthesis; thiamine diphosphate biosynthesis. Its function is as follows. Catalyzes the ATP-dependent transfer of a sulfur to tRNA to produce 4-thiouridine in position 8 of tRNAs, which functions as a near-UV photosensor. Also catalyzes the transfer of sulfur to the sulfur carrier protein ThiS, forming ThiS-thiocarboxylate. This is a step in the synthesis of thiazole, in the thiamine biosynthesis pathway. The sulfur is donated as persulfide by IscS. This chain is Probable tRNA sulfurtransferase, found in Streptococcus gordonii (strain Challis / ATCC 35105 / BCRC 15272 / CH1 / DL1 / V288).